The following is a 325-amino-acid chain: D-alanine--D-alanine ligase (325 aa).

In terms of domain architecture, ATP-grasp spans 121–316 (KYVFEGCGLP…FEELVVRILR (196 aa)). 147 to 202 (VAALGTPLSVKPAHEGSSIGIRKVNSAAELAEAYEAAARLDDLVLVEQWIEGPEFT) is an ATP binding site. Residues Asp270, Glu283, and Asn285 each coordinate Mg(2+).

It belongs to the D-alanine--D-alanine ligase family. Mg(2+) serves as cofactor. It depends on Mn(2+) as a cofactor.

The protein resides in the cytoplasm. The enzyme catalyses 2 D-alanine + ATP = D-alanyl-D-alanine + ADP + phosphate + H(+). Its pathway is cell wall biogenesis; peptidoglycan biosynthesis. Its function is as follows. Cell wall formation. The chain is D-alanine--D-alanine ligase from Marinobacter nauticus (strain ATCC 700491 / DSM 11845 / VT8) (Marinobacter aquaeolei).